We begin with the raw amino-acid sequence, 325 residues long: MIVVGIDHGTSGITACVMENKTVKSVFKMKRTEINEKSFLKELEKQVNLNDIDLIGVCYSMGDGIDKITDIKRVENRGVINLEGIGKKIGGGTKVYDEIKSSNIPAIVIPGLHNGVKSMDKRFNALFSHIASPEKISICYNAYKTFGFENFILSDISSNTVTLLIKDGKIFGGFDACVGAVGILHGPIDLELIRNIDADKITANEAFSKAGVVKVTDSYKGVEDTKFEIMNNYDKDEKCKLAVDSLVLSVSMEINSLMFLTPDKNVILAGSIGTWENPNVSKMIKENIDGNVLVLNRESGAIGSAMIAEDILNGKKEILGIPVDF.

The protein belongs to the UPF0285 family.

The chain is UPF0285 protein MMP0642 from Methanococcus maripaludis (strain DSM 14266 / JCM 13030 / NBRC 101832 / S2 / LL).